The sequence spans 61 residues: MFGIGMPELIVILVIVLVVFGAGRLPEIGGALGKSIRNFKKASDGKDEIEIKPEKKDDPSK.

Residues 1-21 (MFGIGMPELIVILVIVLVVFG) form a helical membrane-spanning segment.

Belongs to the TatA/E family. In terms of assembly, the Tat system comprises two distinct complexes: a TatABC complex, containing multiple copies of TatA, TatB and TatC subunits, and a separate TatA complex, containing only TatA subunits. Substrates initially bind to the TatABC complex, which probably triggers association of the separate TatA complex to form the active translocon.

It localises to the cell inner membrane. Part of the twin-arginine translocation (Tat) system that transports large folded proteins containing a characteristic twin-arginine motif in their signal peptide across membranes. TatA could form the protein-conducting channel of the Tat system. This Geobacter metallireducens (strain ATCC 53774 / DSM 7210 / GS-15) protein is Sec-independent protein translocase protein TatA.